The primary structure comprises 306 residues: D-alanine--D-alanine ligase (306 aa).

The 196-residue stretch at Lys105–Glu300 folds into the ATP-grasp domain. Thr131–Thr186 contributes to the ATP binding site. Positions 254, 267, and 269 each coordinate Mg(2+).

It belongs to the D-alanine--D-alanine ligase family. Requires Mg(2+) as cofactor. The cofactor is Mn(2+).

Its subcellular location is the cytoplasm. It carries out the reaction 2 D-alanine + ATP = D-alanyl-D-alanine + ADP + phosphate + H(+). It functions in the pathway cell wall biogenesis; peptidoglycan biosynthesis. Cell wall formation. The protein is D-alanine--D-alanine ligase of Nitrosomonas eutropha (strain DSM 101675 / C91 / Nm57).